A 289-amino-acid chain; its full sequence is Glycine--tRNA ligase alpha subunit (289 aa).

The protein belongs to the class-II aminoacyl-tRNA synthetase family. As to quaternary structure, tetramer of two alpha and two beta subunits.

Its subcellular location is the cytoplasm. The enzyme catalyses tRNA(Gly) + glycine + ATP = glycyl-tRNA(Gly) + AMP + diphosphate. This is Glycine--tRNA ligase alpha subunit from Nitratidesulfovibrio vulgaris (strain ATCC 29579 / DSM 644 / CCUG 34227 / NCIMB 8303 / VKM B-1760 / Hildenborough) (Desulfovibrio vulgaris).